Reading from the N-terminus, the 316-residue chain is tRNA dimethylallyltransferase (316 aa).

27–34 (GATATGKT) is an ATP binding site. 29–34 (TATGKT) contacts substrate. The interval 52 to 55 (DSRQ) is interaction with substrate tRNA.

This sequence belongs to the IPP transferase family. In terms of assembly, monomer. The cofactor is Mg(2+).

The catalysed reaction is adenosine(37) in tRNA + dimethylallyl diphosphate = N(6)-dimethylallyladenosine(37) in tRNA + diphosphate. Functionally, catalyzes the transfer of a dimethylallyl group onto the adenine at position 37 in tRNAs that read codons beginning with uridine, leading to the formation of N6-(dimethylallyl)adenosine (i(6)A). In Treponema pallidum (strain Nichols), this protein is tRNA dimethylallyltransferase.